Here is a 75-residue protein sequence, read N- to C-terminus: Conotoxin Vn5.5 (75 aa).

Residues 1–19 (MLCLPVFIILLLLASPAAP) form the signal peptide. A propeptide spanning residues 20–59 (NPLEKRIQSDLIRAALEDADMKTDEREIVNIIDSISDVAK) is cleaved from the precursor. Q60 carries the pyrrolidone carboxylic acid modification.

It belongs to the conotoxin T superfamily. Post-translationally, contains 2 disulfide bonds that can be either 'C1-C3, C2-C4' or 'C1-C4, C2-C3', since these disulfide connectivities have been observed for conotoxins with cysteine framework V (for examples, see AC P0DQQ7 and AC P81755). Expressed by the venom duct.

It is found in the secreted. The polypeptide is Conotoxin Vn5.5 (Conus ventricosus (Mediterranean cone)).